Reading from the N-terminus, the 239-residue chain is 2,3,4,5-tetrahydropyridine-2,6-dicarboxylate N-acetyltransferase (239 aa).

Belongs to the transferase hexapeptide repeat family. DapH subfamily.

It carries out the reaction (S)-2,3,4,5-tetrahydrodipicolinate + acetyl-CoA + H2O = L-2-acetamido-6-oxoheptanedioate + CoA. It functions in the pathway amino-acid biosynthesis; L-lysine biosynthesis via DAP pathway; LL-2,6-diaminopimelate from (S)-tetrahydrodipicolinate (acetylase route): step 1/3. In terms of biological role, catalyzes the transfer of an acetyl group from acetyl-CoA to tetrahydrodipicolinate. In Staphylococcus aureus (strain MRSA252), this protein is 2,3,4,5-tetrahydropyridine-2,6-dicarboxylate N-acetyltransferase.